Reading from the N-terminus, the 697-residue chain is Disintegrin and metalloproteinase domain-containing protein 26A (697 aa).

The N-terminal stretch at 1–22 (MFLKFCLWTMFFFSAWSPIGHA) is a signal peptide. Positions 23 to 187 (KYSSLLEVVT…NAPTLLQIPY (165 aa)) are excised as a propeptide. N-linked (GlcNAc...) asparagine glycosylation occurs at Asn-127. Residues 159–166 (MRCGLSEE) carry the Cysteine switch motif. Cys-161 serves as a coordination point for Zn(2+). Topologically, residues 188-671 (ENWWTHHRFI…PPLPLSHSKW (484 aa)) are extracellular. Residues 195 to 385 (RFIEYFVVLD…TKRSCLYDIP (191 aa)) enclose the Peptidase M12B domain. Residue Asn-214 is glycosylated (N-linked (GlcNAc...) asparagine). Intrachain disulfides connect Cys-305-Cys-380, Cys-344-Cys-366, and Cys-346-Cys-351. Position 329 (His-329) interacts with Zn(2+). The active site involves Glu-330. Positions 333 and 339 each coordinate Zn(2+). Asn-365, Asn-391, Asn-464, Asn-506, Asn-531, and Asn-573 each carry an N-linked (GlcNAc...) asparagine glycan. The Disintegrin domain maps to 392–478 (LTVCGNKVVE…ECPGDVYKAD (87 aa)). Cys-450 and Cys-470 are oxidised to a cystine. Positions 616–649 (LVSNCSPQLYHMQGICNNKQHCHCGVTWKPPDCQ) constitute an EGF-like domain. Disulfide bonds link Cys-620–Cys-631 and Cys-639–Cys-648. Residues 672–692 (IVYILIVLDVCIVIIIYLFSF) traverse the membrane as a helical segment. Residues 693–697 (YKLSK) lie on the Cytoplasmic side of the membrane.

It depends on Zn(2+) as a cofactor. In terms of tissue distribution, expressed in sperm (at protein level). Expressed specifically in testis.

It localises to the membrane. Sperm surface membrane protein that may be involved in spermatogenesis and fertilization. The polypeptide is Disintegrin and metalloproteinase domain-containing protein 26A (Mus musculus (Mouse)).